The following is a 401-amino-acid chain: Probable 2,3-bisphosphoglycerate-independent phosphoglycerate mutase (401 aa).

The protein belongs to the BPG-independent phosphoglycerate mutase family. A-PGAM subfamily.

It catalyses the reaction (2R)-2-phosphoglycerate = (2R)-3-phosphoglycerate. It participates in carbohydrate degradation; glycolysis; pyruvate from D-glyceraldehyde 3-phosphate: step 3/5. Catalyzes the interconversion of 2-phosphoglycerate and 3-phosphoglycerate. This chain is Probable 2,3-bisphosphoglycerate-independent phosphoglycerate mutase, found in Thermotoga sp. (strain RQ2).